Here is an 81-residue protein sequence, read N- to C-terminus: Putative CNGA1-overlapping antisense gene protein (81 aa).

Expressed in brain, notably in regions involved in long-term potentiation and long-term depression, such as hippocampal CA1 and CA3, dentate gyrus and cerebellar Purkinje layer.

The polypeptide is Putative CNGA1-overlapping antisense gene protein (Homo sapiens (Human)).